A 176-amino-acid chain; its full sequence is 4-hydroxylaminobenzoate lyase (176 aa).

The protein belongs to the PnbB family.

The enzyme catalyses 4-hydroxylaminobenzoate + H2O + H(+) = 3,4-dihydroxybenzoate + NH4(+). In terms of biological role, lyase involved in the degradation of nitroaromatic compounds. Catalyzes the conversion of 4-hydroxylaminobenzoate to 3,4-dihydroxybenzoate (protocatechuate). Required for the catabolism of 4-nitrotoluene. The chain is 4-hydroxylaminobenzoate lyase from Pseudomonas putida (Arthrobacter siderocapsulatus).